Here is a 346-residue protein sequence, read N- to C-terminus: Extracellular protease (346 aa).

The first 21 residues, 1–21 (MMKATPIALLLAGVLASPLCA), serve as a signal peptide directing secretion. Histidine 296 serves as a coordination point for Zn(2+). Glutamate 297 is a catalytic residue. Zn(2+)-binding residues include histidine 300 and aspartate 309.

The protein belongs to the peptidase M35 family. Zn(2+) is required as a cofactor.

In terms of biological role, heat-labile protease. This is Extracellular protease from Aeromonas hydrophila.